A 389-amino-acid chain; its full sequence is Phospho-N-acetylmuramoyl-pentapeptide-transferase (389 aa).

Helical transmembrane passes span 25 to 45 (RAVM…PWVI), 73 to 93 (TMGG…WADL), 97 to 117 (FIWI…VDDY), 134 to 154 (FFWQ…SVSE), 190 to 210 (VSYP…IVGS), 222 to 242 (GLVI…AYVM), 258 to 278 (GAGE…AFLW), 286 to 306 (VFMG…IAVI), 311 to 331 (IVLF…MLQV), and 366 to 386 (QVVV…LSSL).

The protein belongs to the glycosyltransferase 4 family. MraY subfamily. Requires Mg(2+) as cofactor.

The protein localises to the cell inner membrane. The catalysed reaction is UDP-N-acetyl-alpha-D-muramoyl-L-alanyl-gamma-D-glutamyl-meso-2,6-diaminopimeloyl-D-alanyl-D-alanine + di-trans,octa-cis-undecaprenyl phosphate = di-trans,octa-cis-undecaprenyl diphospho-N-acetyl-alpha-D-muramoyl-L-alanyl-D-glutamyl-meso-2,6-diaminopimeloyl-D-alanyl-D-alanine + UMP. Its pathway is cell wall biogenesis; peptidoglycan biosynthesis. Functionally, catalyzes the initial step of the lipid cycle reactions in the biosynthesis of the cell wall peptidoglycan: transfers peptidoglycan precursor phospho-MurNAc-pentapeptide from UDP-MurNAc-pentapeptide onto the lipid carrier undecaprenyl phosphate, yielding undecaprenyl-pyrophosphoryl-MurNAc-pentapeptide, known as lipid I. The polypeptide is Phospho-N-acetylmuramoyl-pentapeptide-transferase (Polynucleobacter necessarius subsp. necessarius (strain STIR1)).